A 211-amino-acid polypeptide reads, in one-letter code: Peptidyl-tRNA hydrolase (211 aa).

Position 15 (Y15) interacts with tRNA. H20 acts as the Proton acceptor in catalysis. Residues F66, N68, and N114 each contribute to the tRNA site. Residues 189–211 (TKPPRPKATRPAQAQAAPQAGAD) form a disordered region. A compositionally biased stretch (low complexity) spans 197-211 (TRPAQAQAAPQAGAD).

Belongs to the PTH family. As to quaternary structure, monomer.

The protein resides in the cytoplasm. It carries out the reaction an N-acyl-L-alpha-aminoacyl-tRNA + H2O = an N-acyl-L-amino acid + a tRNA + H(+). Functionally, hydrolyzes ribosome-free peptidyl-tRNAs (with 1 or more amino acids incorporated), which drop off the ribosome during protein synthesis, or as a result of ribosome stalling. Catalyzes the release of premature peptidyl moieties from peptidyl-tRNA molecules trapped in stalled 50S ribosomal subunits, and thus maintains levels of free tRNAs and 50S ribosomes. The chain is Peptidyl-tRNA hydrolase from Acidovorax ebreus (strain TPSY) (Diaphorobacter sp. (strain TPSY)).